Reading from the N-terminus, the 164-residue chain is Protein-export protein SecB (164 aa).

The protein belongs to the SecB family. As to quaternary structure, homotetramer, a dimer of dimers. One homotetramer interacts with 1 SecA dimer.

It is found in the cytoplasm. Its function is as follows. One of the proteins required for the normal export of preproteins out of the cell cytoplasm. It is a molecular chaperone that binds to a subset of precursor proteins, maintaining them in a translocation-competent state. It also specifically binds to its receptor SecA. The protein is Protein-export protein SecB of Ruegeria sp. (strain TM1040) (Silicibacter sp.).